A 376-amino-acid chain; its full sequence is Alanine racemase (376 aa).

Lys40 (proton acceptor; specific for D-alanine) is an active-site residue. At Lys40 the chain carries N6-(pyridoxal phosphate)lysine. Substrate is bound at residue Arg138. Tyr270 (proton acceptor; specific for L-alanine) is an active-site residue. Met317 provides a ligand contact to substrate.

Belongs to the alanine racemase family. Requires pyridoxal 5'-phosphate as cofactor.

The catalysed reaction is L-alanine = D-alanine. It participates in amino-acid biosynthesis; D-alanine biosynthesis; D-alanine from L-alanine: step 1/1. In terms of biological role, catalyzes the interconversion of L-alanine and D-alanine. May also act on other amino acids. In Lactobacillus delbrueckii subsp. bulgaricus (strain ATCC 11842 / DSM 20081 / BCRC 10696 / JCM 1002 / NBRC 13953 / NCIMB 11778 / NCTC 12712 / WDCM 00102 / Lb 14), this protein is Alanine racemase (alr).